The chain runs to 968 residues: Protein translocase subunit SecA (968 aa).

Residues Gln86, 104–108 (GEGKT), and Asp494 contribute to the ATP site. Residues 835 to 968 (PAESAEESTD…RAAKAAKKRR (134 aa)) are disordered. 2 stretches are compositionally biased toward low complexity: residues 883-892 (ARVATRPAAE) and 910-923 (SAPS…FSEG). The segment covering 956–968 (ARRRAAKAAKKRR) has biased composition (basic residues).

It belongs to the SecA family. As to quaternary structure, monomer and homodimer. Part of the essential Sec protein translocation apparatus which comprises SecA, SecYEG and auxiliary proteins SecDF. Other proteins may also be involved.

The protein resides in the cell membrane. It is found in the cytoplasm. It catalyses the reaction ATP + H2O + cellular proteinSide 1 = ADP + phosphate + cellular proteinSide 2.. In terms of biological role, part of the Sec protein translocase complex. Interacts with the SecYEG preprotein conducting channel. Has a central role in coupling the hydrolysis of ATP to the transfer of proteins into and across the cell membrane, serving as an ATP-driven molecular motor driving the stepwise translocation of polypeptide chains across the membrane. The sequence is that of Protein translocase subunit SecA from Beutenbergia cavernae (strain ATCC BAA-8 / DSM 12333 / CCUG 43141 / JCM 11478 / NBRC 16432 / NCIMB 13614 / HKI 0122).